The sequence spans 362 residues: MGEEGIKINDTHKRRIDEVEPSEKEDNVERQTKKYNFEIDEPEEQEKKDEKEDDKEESPSKSLEEISQSVSPVEEEPRDVRFKELSTPFSYPINDPPEGRPVRVYADGVFDLFHIGHMRQLEQAKKVFPNVHLIVGLPNDQLTHRLKGLTVMNDKERAEALRHCKWVDEVLENAPWVITPEFLEEHKIDFVAHDDIPYASDDSGDIYLPVKKVGKFIPTKRTEGVSTSDLITRIIRDYDQYVMRNLARGVNRKELNVSLFKKNELDLRHHIKVLRDTLRNHWVSTTRDLKADIKSFLSMATTDYQLQKNPLHGSSEPSSPGPTGFLGGINRWMQRRSSSHYDLPRVGNEIAASSSSATEENH.

The span at 1–37 (MGEEGIKINDTHKRRIDEVEPSEKEDNVERQTKKYNF) shows a compositional bias: basic and acidic residues. Positions 1–79 (MGEEGIKIND…VSPVEEEPRD (79 aa)) are disordered. Residues 109–117 (VFDLFHIGH) and Lys147 each bind CTP. Substrate contacts are provided by Lys147 and Trp176. Residues 193–194 (HD), Tyr198, and 221–225 (RTEGV) each bind CTP. A disordered region spans residues 308 to 362 (KNPLHGSSEPSSPGPTGFLGGINRWMQRRSSSHYDLPRVGNEIAASSSSATEENH). 2 stretches are compositionally biased toward low complexity: residues 313-323 (GSSEPSSPGPT) and 351-362 (AASSSSATEENH). Phosphoserine is present on residues Ser315 and Ser319. Thr323 carries the post-translational modification Phosphothreonine. Ser355 is subject to Phosphoserine.

It belongs to the cytidylyltransferase family.

The protein resides in the nucleus. The catalysed reaction is phosphocholine + CTP + H(+) = CDP-choline + diphosphate. The sequence is that of Probable choline-phosphate cytidylyltransferase from Schizosaccharomyces pombe (strain 972 / ATCC 24843) (Fission yeast).